The following is a 484-amino-acid chain: MSASRPAAVMVLAAGEGTRMKSRRPKVLHEICGRSLLGHVLAAVAELEPQRTVVVVGHAREQVTEHLKSIAPHAITALQEEQKGTGHAVRMAIEALRAQNVELTGTVVLTCGDTPLLRGATLRDLVAAHEAEGNAVTILSARVPDPTGYGRIVRDAAGAVTGIVEHADATEEQRAVDEINSGMYAFDGALLSQVVHRLSADNAKGEEYITDAVALLRGDGHRVGAYIAPDRTEVEGVNDRVQLAEARRLLNARLLEQLMRDGVTVVDPASTWVDVDVRVGRDAVLEPQTQLQGRTVIGEGAQVGPATVLCDTEVGEDAVVSHTVAREAVIGPEATVGPYAYLRPGARLDRGVKIGTFVEVKNSTVGEGSKVPHLTYVGDADIGKGVNIGASSVFVNYDGVNKHRTVIGDYARTGSDTMFVAPVRVGDGAYTGAGTVVREDVPPGALAVSAGPQRTIEGWVERKRPGTPAAQAAERARARSEEDR.

Positions 1 to 240 (MSASRPAAVM…RTEVEGVNDR (240 aa)) are pyrophosphorylase. UDP-N-acetyl-alpha-D-glucosamine is bound by residues 12-15 (LAAG), Lys26, Gln79, and 84-85 (GT). Asp113 contacts Mg(2+). Positions 150, 165, 180, and 238 each coordinate UDP-N-acetyl-alpha-D-glucosamine. Asn238 serves as a coordination point for Mg(2+). Residues 241 to 261 (VQLAEARRLLNARLLEQLMRD) form a linker region. The tract at residues 262-484 (GVTVVDPAST…RARARSEEDR (223 aa)) is N-acetyltransferase. The UDP-N-acetyl-alpha-D-glucosamine site is built by Arg343 and Lys361. His373 (proton acceptor) is an active-site residue. Residues Tyr376 and Asn387 each coordinate UDP-N-acetyl-alpha-D-glucosamine. Residues Ala390, 396-397 (NY), Ser415, and Ala433 each bind acetyl-CoA. Residues 457–484 (EGWVERKRPGTPAAQAAERARARSEEDR) form a disordered region. Positions 474 to 484 (ERARARSEEDR) are enriched in basic and acidic residues.

It in the N-terminal section; belongs to the N-acetylglucosamine-1-phosphate uridyltransferase family. In the C-terminal section; belongs to the transferase hexapeptide repeat family. Homotrimer. Mg(2+) is required as a cofactor.

The protein localises to the cytoplasm. It catalyses the reaction alpha-D-glucosamine 1-phosphate + acetyl-CoA = N-acetyl-alpha-D-glucosamine 1-phosphate + CoA + H(+). The enzyme catalyses N-acetyl-alpha-D-glucosamine 1-phosphate + UTP + H(+) = UDP-N-acetyl-alpha-D-glucosamine + diphosphate. Its pathway is nucleotide-sugar biosynthesis; UDP-N-acetyl-alpha-D-glucosamine biosynthesis; N-acetyl-alpha-D-glucosamine 1-phosphate from alpha-D-glucosamine 6-phosphate (route II): step 2/2. It functions in the pathway nucleotide-sugar biosynthesis; UDP-N-acetyl-alpha-D-glucosamine biosynthesis; UDP-N-acetyl-alpha-D-glucosamine from N-acetyl-alpha-D-glucosamine 1-phosphate: step 1/1. The protein operates within bacterial outer membrane biogenesis; LPS lipid A biosynthesis. Functionally, catalyzes the last two sequential reactions in the de novo biosynthetic pathway for UDP-N-acetylglucosamine (UDP-GlcNAc). The C-terminal domain catalyzes the transfer of acetyl group from acetyl coenzyme A to glucosamine-1-phosphate (GlcN-1-P) to produce N-acetylglucosamine-1-phosphate (GlcNAc-1-P), which is converted into UDP-GlcNAc by the transfer of uridine 5-monophosphate (from uridine 5-triphosphate), a reaction catalyzed by the N-terminal domain. This Thermobifida fusca (strain YX) protein is Bifunctional protein GlmU.